We begin with the raw amino-acid sequence, 490 residues long: Pre-glycoprotein polyprotein GP complex (490 aa).

Residue Gly-2 is the site of N-myristoyl glycine; by host attachment. Over Gly-2–Glu-17 the chain is Extracellular. Residues Val-18–Lys-33 traverse the membrane as a helical segment. At Gly-34–Ser-58 the chain is on the cytoplasmic side. Cys-57 is a binding site for Zn(2+). Topologically, residues Leu-59 to Asp-431 are extracellular. Asn-78, Asn-88, Asn-98, Asn-108, Asn-118, and Asn-166 each carry an N-linked (GlcNAc...) asparagine; by host glycan. 6 disulfide bridges follow: Cys-85–Cys-230, Cys-117–Cys-154, Cys-179–Cys-211, Cys-278–Cys-291, Cys-300–Cys-309, and Cys-363–Cys-384. N-linked (GlcNAc...) asparagine; by host glycosylation is present at Asn-223. Asn-364, Asn-372, Asn-389, and Asn-394 each carry an N-linked (GlcNAc...) asparagine; by host glycan. A helical transmembrane segment spans residues Leu-432–Pro-452. Residues Thr-453 to Arg-490 are Cytoplasmic-facing. Zn(2+)-binding residues include His-454, His-456, Cys-462, His-466, Cys-474, and Cys-476.

The protein belongs to the arenaviridae GPC protein family. Interacts with glycoprotein G2. Part of the GP complex (GP-C) together with glycoprotein G1 and glycoprotein G2. The GP-complex interacts with protein Z, which interacts with ribonucleocapsid; these interactions may induce virion budding. In terms of assembly, homotrimer; disulfide-linked. In pre-fusion state, G1 homotrimers bind G2 homotrimers via ionic interactions. Part of the GP complex (GP-C) together with glycoprotein G2 and the stable signal peptide. Interacts with the primary host receptor DAG1 on the cell surface; this interaction occurs at pH 8.0 but not at pH 6.0 and below. Upon virus internalization and at endosomal pH, interacts with the host lysosomal protein LAMP1; this interaction mediates G1 dissociation from GP-C and membrane fusion. The GP-complex interacts with protein Z, which interacts with ribonucleocapsid; these interactions may induce virion budding. As to quaternary structure, homotrimer. Interacts with the stable signal peptide. In pre-fusion state, G2 homotrimers bind G1 homotrimers via ionic interactions. Part of the GP complex (GP-C) together with glycoprotein G1 and the stable signal peptide. Acidification in the endosome triggers rearrangements, which ultimately leads to a 6 helix bundle formed by the two heptad repeat domains (HR1 and HR2) in post-fusion state. The GP-complex interacts with protein Z, which interacts with ribonucleocapsid; these interactions may induce virion budding. Specific enzymatic cleavages in vivo yield mature proteins. GP-C polyprotein is cleaved in the endoplasmic reticulum by the host protease MBTPS1. Only cleaved glycoprotein is incorporated into virions. Post-translationally, the SSP remains stably associated with the GP complex following cleavage by signal peptidase and plays crucial roles in the trafficking of GP through the secretory pathway. In terms of processing, myristoylation is necessary for GP2-mediated fusion activity.

Its subcellular location is the virion membrane. It is found in the host endoplasmic reticulum membrane. The protein localises to the host Golgi apparatus membrane. It localises to the host cell membrane. Functions as a cleaved signal peptide that is retained as the third component of the GP complex (GP-C). Helps to stabilize the spike complex in its native conformation. The SSP is required for efficient glycoprotein expression, post-translational maturation cleavage of G1 and G2, glycoprotein transport to the cell surface plasma membrane, formation of infectious virus particles, and acid pH-dependent glycoprotein-mediated cell fusion. In terms of biological role, forms the virion spikes together with glycoprotein G2. The glycoprotein spike trimers are connected to the underlying matrix. Interacts with the host receptor. Mediates virus attachment to the host primary receptor alpha-dystroglycan DAG1 (alpha-DG) at the cell surface. This attachment induces virion internalization apparently through macropinocytosis. Following endocytosis, there is a pH-dependent switch from binding DAG1 to the host lysosomal receptor LAMP1. This latter binding triggers the dissociation of GP1, exposing the fusion subunit, GP2, such that fusion can occur. Down-modulates host DAG1. Functionally, forms the virion spikes together with glycoprotein G1. The glycoprotein spike trimers are connected to the underlying matrix. Class I viral fusion protein that directs fusion of viral and host endosomal membranes, leading to delivery of the nucleocapsid into the cytoplasm. Membrane fusion is mediated by irreversible conformational changes induced by acidification. The chain is Pre-glycoprotein polyprotein GP complex from Lassa virus (strain GA391) (LASV).